We begin with the raw amino-acid sequence, 406 residues long: LIM/homeobox protein Lhx2 (406 aa).

2 consecutive LIM zinc-binding domains span residues 53-105 (CAGC…CKED) and 115-168 (CARC…CRLH). A disordered region spans residues 250–270 (DAEHLDRDQPYPSSQKTKRMR). The segment at residues 266–325 (TKRMRTSFKHHQLRTMKSYFAINHNPDAKDLKQLAQKTGLTKRVLQVWFQNARAKFRRNL) is a DNA-binding region (homeobox). Residues 307–323 (KRVLQVWFQNARAKFRR) carry the Nuclear localization signal motif. Residues 328–356 (QENTGVDKTSDATLQTGTPSGPASELSNA) show a composition bias toward polar residues. 2 disordered regions span residues 328–375 (QENT…SPTL) and 387–406 (GNLE…TNLF). Residues 357–375 (SLSPSSTPTTLTDLTSPTL) show a composition bias toward low complexity. The segment covering 396-406 (SPSQTTLTNLF) has biased composition (polar residues).

Interacts (via LIM domains) with CITED2. Interacts with POU4F2 isoform 1.

Its subcellular location is the nucleus. Acts as a transcriptional activator. Stimulates the promoter of the alpha-glycoprotein gene. Transcriptional regulatory protein involved in the control of cell differentiation in developing lymphoid and neural cell types. The protein is LIM/homeobox protein Lhx2 (Lhx2) of Mus musculus (Mouse).